We begin with the raw amino-acid sequence, 102 residues long: Small integral membrane protein 29 (102 aa).

N3 carries N-linked (GlcNAc...) asparagine glycosylation. A helical membrane pass occupies residues 21 to 41; it reads VLGPFFLITLVGVVVAVVMYV.

In terms of tissue distribution, expressed in spleen, thymus, prostate, testis, uterus, small intestine, colon and peripheral blood leukocytes.

The protein localises to the membrane. The polypeptide is Small integral membrane protein 29 (Homo sapiens (Human)).